The following is a 153-amino-acid chain: 3-dehydroquinate dehydratase (153 aa).

Y26 functions as the Proton acceptor in the catalytic mechanism. N77, H83, and D90 together coordinate substrate. Residue H103 is the Proton donor of the active site. Substrate is bound by residues 104–105 (LS) and R114.

It belongs to the type-II 3-dehydroquinase family. As to quaternary structure, homododecamer.

The enzyme catalyses 3-dehydroquinate = 3-dehydroshikimate + H2O. The protein operates within metabolic intermediate biosynthesis; chorismate biosynthesis; chorismate from D-erythrose 4-phosphate and phosphoenolpyruvate: step 3/7. Its function is as follows. Catalyzes a trans-dehydration via an enolate intermediate. This chain is 3-dehydroquinate dehydratase, found in Colwellia psychrerythraea (strain 34H / ATCC BAA-681) (Vibrio psychroerythus).